A 448-amino-acid chain; its full sequence is Protein kinase C and casein kinase substrate in neurons protein 2 (448 aa).

One can recognise an F-BAR domain in the interval 11–282; the sequence is VEVSSDSFWE…NIKTADAVED (272 aa). A coiled-coil region spans residues 25-274; sequence KRTVKRIDDG…NIYRELEQNI (250 aa). The disordered stretch occupies residues 315 to 386; sequence SRREKKKASD…DTNPFDEDTS (72 aa). Residues 329–358 show a composition bias toward polar residues; it reads TGINQTGDQVSQPNKHSSVSSYEKNQSYPT. The NPF1 signature appears at 367-369; the sequence is NPF. The short motif at 379-381 is the NPF2 element; sequence NPF. Residues 388 to 448 enclose the SH3 domain; it reads VMEVRVRALY…YPANYVEPIQ (61 aa).

It belongs to the PACSIN family. Post-translationally, phosphorylated on serine residues. In terms of tissue distribution, detected in intestine, cardiac muscle, lung and brain (at protein level). Expressed in all tissues tested, including, gizzard, liver, cardiac muscle, skeletal muscle and skin.

The protein localises to the cytoplasm. It is found in the cytoskeleton. Its subcellular location is the cytoplasmic vesicle membrane. The protein resides in the cell projection. It localises to the ruffle membrane. The protein localises to the early endosome. It is found in the recycling endosome membrane. Its subcellular location is the cell membrane. The protein resides in the membrane. It localises to the caveola. The protein localises to the cell junction. It is found in the focal adhesion. Regulates the morphogenesis and endocytosis of caveolae. Lipid-binding protein that is able to promote the tubulation of the phosphatidic acid-containing membranes it preferentially binds. Plays a role in intracellular vesicle-mediated transport. Involved in the endocytosis of cell-surface receptors like the EGF receptor, contributing to its internalization in the absence of EGF stimulus. Essential for endothelial organization in sprouting angiogenesis, modulates CDH5-based junctions. Facilitates endothelial front-rear polarity during migration by recruiting EHD4 and MICALL1 to asymmetric adherens junctions between leader and follower cells. This is Protein kinase C and casein kinase substrate in neurons protein 2 (PACSIN2) from Gallus gallus (Chicken).